A 446-amino-acid chain; its full sequence is Tubulin beta-1 chain (446 aa).

Residues Gln11, Glu69, Ser138, Gly142, Thr143, Gly144, Asn204, and Asn226 each contribute to the GTP site. Glu69 is a Mg(2+) binding site.

This sequence belongs to the tubulin family. In terms of assembly, dimer of alpha and beta chains. A typical microtubule is a hollow water-filled tube with an outer diameter of 25 nm and an inner diameter of 15 nM. Alpha-beta heterodimers associate head-to-tail to form protofilaments running lengthwise along the microtubule wall with the beta-tubulin subunit facing the microtubule plus end conferring a structural polarity. Microtubules usually have 13 protofilaments but different protofilament numbers can be found in some organisms and specialized cells. It depends on Mg(2+) as a cofactor.

The protein localises to the cytoplasm. It localises to the cytoskeleton. Tubulin is the major constituent of microtubules, a cylinder consisting of laterally associated linear protofilaments composed of alpha- and beta-tubulin heterodimers. Microtubules grow by the addition of GTP-tubulin dimers to the microtubule end, where a stabilizing cap forms. Below the cap, tubulin dimers are in GDP-bound state, owing to GTPase activity of alpha-tubulin. This Suillus bovinus (Jersey cow bolete) protein is Tubulin beta-1 chain (TUBB1).